The primary structure comprises 99 residues: Cytochrome c2 iso-1 (99 aa).

Residues C10, C13, H14, and M75 each contribute to the heme c site.

The protein belongs to the cytochrome c family. Binds 1 heme c group covalently per subunit.

In terms of biological role, cytochrome c2 is found mainly in purple, non-sulfur, photosynthetic bacteria where it functions as the electron donor to the oxidized bacteriochlorophyll in the photophosphorylation pathway. However, it may also have a role in the respiratory chain and is found in some non-photosynthetic bacteria. This is Cytochrome c2 iso-1 from Magnetospirillum fulvum (Rhodospirillum fulvum).